Here is a 380-residue protein sequence, read N- to C-terminus: Protein kinase ORF15 (380 aa).

In terms of domain architecture, Protein kinase spans 93–371 (FIPVKVAGCL…LLIAQLTKFI (279 aa)). K118 serves as a coordination point for ATP. D217 (proton acceptor) is an active-site residue.

This sequence belongs to the protein kinase superfamily. Ser/Thr protein kinase family.

It catalyses the reaction L-seryl-[protein] + ATP = O-phospho-L-seryl-[protein] + ADP + H(+). The enzyme catalyses L-threonyl-[protein] + ATP = O-phospho-L-threonyl-[protein] + ADP + H(+). This chain is Protein kinase ORF15 (ORF15), found in Ictalurid herpesvirus 1 (strain Auburn) (IcHV-1).